The sequence spans 75 residues: MQVLVRDNNVDQALRALKKKMQREGIFREMKMRGHYEKPSEKRAREKAEAVRRARKLARKRAQREGLIGGRTGAR.

The protein belongs to the bacterial ribosomal protein bS21 family.

This is Small ribosomal subunit protein bS21 from Brucella abortus (strain S19).